The primary structure comprises 575 residues: Amino-acid acetyltransferase, mitochondrial (575 aa).

The N-terminal 35 residues, 1–35 (MSKLRNLNRQFISNLKTHETVTNAKRNLILSILKS), are a transit peptide targeting the mitochondrion. Residues 398-557 (FTLNNLVQDG…QGIPGGVNIH (160 aa)) form the N-acetyltransferase domain.

It belongs to the acetyltransferase family.

Its subcellular location is the mitochondrion. The enzyme catalyses L-glutamate + acetyl-CoA = N-acetyl-L-glutamate + CoA + H(+). It functions in the pathway amino-acid biosynthesis; L-arginine biosynthesis; N(2)-acetyl-L-ornithine from L-glutamate: step 1/4. Its function is as follows. N-acetylglutamate synthase involved in arginine biosynthesis. The sequence is that of Amino-acid acetyltransferase, mitochondrial (ARG2) from Debaryomyces hansenii (strain ATCC 36239 / CBS 767 / BCRC 21394 / JCM 1990 / NBRC 0083 / IGC 2968) (Yeast).